The chain runs to 336 residues: Phosphate acyltransferase (336 aa).

It belongs to the PlsX family. Homodimer. Probably interacts with PlsY.

Its subcellular location is the cytoplasm. The catalysed reaction is a fatty acyl-[ACP] + phosphate = an acyl phosphate + holo-[ACP]. It participates in lipid metabolism; phospholipid metabolism. In terms of biological role, catalyzes the reversible formation of acyl-phosphate (acyl-PO(4)) from acyl-[acyl-carrier-protein] (acyl-ACP). This enzyme utilizes acyl-ACP as fatty acyl donor, but not acyl-CoA. The chain is Phosphate acyltransferase from Pseudomonas aeruginosa (strain UCBPP-PA14).